The sequence spans 673 residues: MAKPAQGAKYRGSIHDFPGFDPNQDAEALYTAMKGFGSDKEAILDIITSRSNRQRQEVCQSYKSLYGKDLIADLKYELTGKFERLIVGLMRPPAYCDAKEIKDAISGIGTDEKCLIEILASRTNEQMHQLVAAYKDAYERDLEADIIGDTSGHFQKMLVVLLQGTREEDDVVSEDLVQQDVQDLYEAGELKWGTDEAQFIYILGNRSKQHLRLVFDEYLKTTGKPIEASIRGELSGDFEKLMLAVVKCIRSTPEYFAERLFKAMKGLGTRDNTLIRIMVSRSELDMLDIREIFRTKYEKSLYSMIKNDTSGEYKKTLLKLSGGDDDAAGQFFPEAAQVAYQMWELSAVARVELKGTVRPANDFNPDADAKALRKAMKGLGTDEDTIIDIITHRSNVQRQQIRQTFKSHFGRDLMTDLKSEISGDLARLILGLMMPPAHYDAKQLKKAMEGAGTDEKALIEILATRTNAEIRAINEAYKEDYHKSLEDALSSDTSGHFRRILISLATGHREEGGENLDQAREDAQVAAEILEIADTPSGDKTSLETRFMTILCTRSYPHLRRVFQEFIKMTNYDVEHTIKKEMSGDVRDAFVAIVQSVKNKPLFFADKLYKSMKGAGTDEKTLTRIMVSRSEIDLLNIRREFIEKYDKSLHQAIEGDTSGDFLKALLALCGGED.

Residue A2 is modified to N-acetylalanine. S13 bears the Phosphoserine mark. Annexin repeat units lie at residues 20–91 (FDPN…GLMR), 92–163 (PPAY…VLLQ), 175–247 (DLVQ…AVVK), 251–322 (STPE…KLSG), 363–434 (FNPD…GLMM), 435–506 (PPAH…SLAT), 521–595 (EDAQ…AIVQ), and 599–670 (NKPL…ALCG). Y30 is subject to Phosphotyrosine. Residues K63, K68, K75, and K81 each carry the N6-acetyllysine modification. Y201 bears the Phosphotyrosine mark. K306, K370, and K418 each carry N6-acetyllysine. At S422 the chain carries Phosphoserine. The residue at position 483 (K483) is an N6-acetyllysine. A Phosphoserine modification is found at S537. K620 bears the N6-acetyllysine mark.

This sequence belongs to the annexin family. Post-translationally, phosphorylated in response to growth factor stimulation.

It localises to the cytoplasm. Its subcellular location is the melanosome. In terms of biological role, may associate with CD21. May regulate the release of Ca(2+) from intracellular stores. The chain is Annexin A6 (ANXA6) from Homo sapiens (Human).